The sequence spans 58 residues: Transactivator protein ORF121 (58 aa).

In terms of biological role, stimulates the expression of 39k gene most probably by increasing IE1 expression. This is Transactivator protein ORF121 (AC121) from Lepidoptera (butterflies and moths).